Reading from the N-terminus, the 192-residue chain is Glycerol-3-phosphate acyltransferase (192 aa).

A run of 5 helical transmembrane segments spans residues 5–25 (VVLI…ITRI), 50–70 (FLAA…VYIA), 78–98 (DFYI…PIWL), 112–132 (ILIA…IIVF), and 153–173 (SFFF…LVFL).

Belongs to the PlsY family. As to quaternary structure, probably interacts with PlsX.

The protein localises to the cell membrane. The catalysed reaction is an acyl phosphate + sn-glycerol 3-phosphate = a 1-acyl-sn-glycero-3-phosphate + phosphate. It participates in lipid metabolism; phospholipid metabolism. In terms of biological role, catalyzes the transfer of an acyl group from acyl-phosphate (acyl-PO(4)) to glycerol-3-phosphate (G3P) to form lysophosphatidic acid (LPA). This enzyme utilizes acyl-phosphate as fatty acyl donor, but not acyl-CoA or acyl-ACP. In Wolbachia pipientis wMel, this protein is Glycerol-3-phosphate acyltransferase.